The chain runs to 405 residues: MRCAPTAGAALVLCAATAGLLSAQGRPAQPEPPRFASWDEMNLLAHGLLQLGHGLREHVERTRGQLGALERRMAACGNACQGPKGTDPKDRVPEGQAPETLQSLQTQLKAQNSKIQQLFQKVAQQQRYLSKQNLRIQNLQSQIDLLTPTHLDNGVDKTSRGKRLPKMAQLIGLTPNATRLHRPPRDCQELFQEGERHSGLFQIQPLGSPPFLVNCEMTSDGGWTVIQRRLNGSVDFNQSWEAYKDGFGDPQGEFWLGLEKMHSITGDRGSQLAVQLQDWDGNAKLLQFPIHLGGEDTAYSLQLTEPTANELGATNVSPNGLSLPFSTWDQDHDLRGDLNCAKSLSGGWWFGTCSHSNLNGQYFHSIPRQRQQRKKGIFWKTWKGRYYPLQATTLLIQPMEATAAS.

The signal sequence occupies residues 1–23 (MRCAPTAGAALVLCAATAGLLSA). A coiled-coil region spans residues 54–146 (GLREHVERTR…QNLQSQIDLL (93 aa)). Asn176 carries N-linked (GlcNAc...) asparagine glycosylation. Residues 178–400 (TRLHRPPRDC…ATTLLIQPME (223 aa)) form the Fibrinogen C-terminal domain. Cysteines 187 and 215 form a disulfide. Residues Asn231 and Asn237 are each glycosylated (N-linked (GlcNAc...) asparagine). Cys340 and Cys353 are disulfide-bonded.

Homooligomer; disulfide-linked via Cys residues in the N-terminal part of the protein. The homooligomer undergoes proteolytic processing to release its carboxyl fibrinogen-like domain, which circulates as a monomer. The homooligomer unprocessed form is able to interact with the extracellular matrix. N-glycosylated. Post-translationally, forms disulfide-linked dimers and tetramers. In terms of processing, cleaved into a smaller N-terminal chain and a larger chain that contains the fibrinogen C-terminal domain; both cleaved and uncleaved forms are detected in the extracellular space. The cleaved form is not present within the cell.

The protein resides in the secreted. The protein localises to the extracellular space. It is found in the extracellular matrix. In terms of biological role, mediates inactivation of the lipoprotein lipase LPL, and thereby plays a role in the regulation of triglyceride clearance from the blood serum and in lipid metabolism. May also play a role in regulating glucose homeostasis and insulin sensitivity. Inhibits proliferation, migration, and tubule formation of endothelial cells and reduces vascular leakage. Upon heterologous expression, inhibits the adhesion of endothelial cell to the extracellular matrix (ECM), and inhibits the reorganization of the actin cytoskeleton, formation of actin stress fibers and focal adhesions in endothelial cells that have adhered to ANGPTL4-containing ECM (in vitro). Depending on context, may modulate tumor-related angiogenesis. Functionally, mediates inactivation of the lipoprotein lipase LPL, and thereby plays an important role in the regulation of triglyceride clearance from the blood serum and in lipid metabolism. Has higher activity in LPL inactivation than the uncleaved protein. The polypeptide is Angiopoietin-related protein 4 (Angptl4) (Rattus norvegicus (Rat)).